Consider the following 145-residue polypeptide: Transcription antitermination protein NusB (145 aa).

Belongs to the NusB family.

Involved in transcription antitermination. Required for transcription of ribosomal RNA (rRNA) genes. Binds specifically to the boxA antiterminator sequence of the ribosomal RNA (rrn) operons. This Geotalea uraniireducens (strain Rf4) (Geobacter uraniireducens) protein is Transcription antitermination protein NusB.